The chain runs to 290 residues: MQDPRLLMGKPVRERILEEVRSVTEKVDRIGKLVSISIGDVPEVAVYVRNQARAASTAGLPFDQEFWGADVTQDECKAMIQKMNDDPEVLGIILQRPVPDHINVRSLQSAIHPLKDVEGMNPASIGNIVYNDVAMAPCTAAAAVELIRETGLKLEGLEVVMVGHSEIVGKPAAMMLMAEGATVTVCHHLTRSVAMHSRRADVIVVAVGKAHLIGADMVKPGAAVIDIGINQITEADGNTRIVGDVDTDAVKEIAGWVTPVPGGVGPVTVAILMRNAVRAHERQKAAGWYA.

NADP(+)-binding positions include 163-165 and Ile229; that span reads GHS.

This sequence belongs to the tetrahydrofolate dehydrogenase/cyclohydrolase family. In terms of assembly, homodimer.

The enzyme catalyses (6R)-5,10-methylene-5,6,7,8-tetrahydrofolate + NADP(+) = (6R)-5,10-methenyltetrahydrofolate + NADPH. It catalyses the reaction (6R)-5,10-methenyltetrahydrofolate + H2O = (6R)-10-formyltetrahydrofolate + H(+). Its pathway is one-carbon metabolism; tetrahydrofolate interconversion. Functionally, catalyzes the oxidation of 5,10-methylenetetrahydrofolate to 5,10-methenyltetrahydrofolate and then the hydrolysis of 5,10-methenyltetrahydrofolate to 10-formyltetrahydrofolate. The protein is Bifunctional protein FolD 3 of Roseobacter denitrificans (strain ATCC 33942 / OCh 114) (Erythrobacter sp. (strain OCh 114)).